The chain runs to 87 residues: MKLSIFFVLFFIAIAYCQPEFLDDEEDEVEETLPVAEEGREKSCITWRNSCMHNDKGCCFPWSCVCWSQTVPRNSSRKEKKCQCRLW.

A signal peptide spans 1–17 (MKLSIFFVLFFIAIAYC). A propeptide spanning residues 18-40 (QPEFLDDEEDEVEETLPVAEEGR) is cleaved from the precursor. 4 cysteine pairs are disulfide-bonded: Cys44–Cys59, Cys51–Cys64, Cys58–Cys84, and Cys66–Cys82.

It belongs to the neurotoxin omega-lctx family. As to expression, expressed by the venom gland.

It is found in the secreted. Its function is as follows. Modulates Cav2.1/CACNA1A voltage-gated calcium channels (P/Q-type currents) in rat cerebellar Purkinje cells and hippocampal CA1-CA3 neurons. At saturating concentrations (&gt;10 nM) decelerates activation kinetics and slightly increases peak amplitude without affecting deactivation kinetics. In vivo, does not cause death when intravenously injected into mice. In rat models, through its activity on Cav2.1/CACNA1A, has an ameliorative effect on memory defects provoked by hyperstimulation of N-methyl-D-aspartate receptors (NMDARs) in the hippocampus. In Alopecosa marikovskyi (Wolf spider), this protein is Omega-lycotoxin-Am1d.